The chain runs to 281 residues: Phosphate import ATP-binding protein PstB 1 (281 aa).

The disordered stretch occupies residues 1–34 (MTENTAETADESSDGGVTATTGAATTTPTTPPEP). The span at 15–28 (GGVTATTGAATTTP) shows a compositional bias: low complexity. The region spanning 36–276 (IRARDLDVFY…PEHQRVEEYI (241 aa)) is the ABC transporter domain. 68-75 (GPSGCGKS) lines the ATP pocket.

This sequence belongs to the ABC transporter superfamily. Phosphate importer (TC 3.A.1.7) family. As to quaternary structure, the complex is composed of two ATP-binding proteins (PstB), two transmembrane proteins (PstC and PstA) and a solute-binding protein (PstS).

The protein resides in the cell membrane. It catalyses the reaction phosphate(out) + ATP + H2O = ADP + 2 phosphate(in) + H(+). Part of the ABC transporter complex PstSACB involved in phosphate import. Responsible for energy coupling to the transport system. This is Phosphate import ATP-binding protein PstB 1 from Halobacterium salinarum (strain ATCC 700922 / JCM 11081 / NRC-1) (Halobacterium halobium).